The following is a 521-amino-acid chain: GRAS family protein RAD1 (521 aa).

In terms of domain architecture, GRAS spans 137–520 (DGSCADGMRL…KPIVAVSCWK (384 aa)). The leucine repeat I (LRI) stretch occupies residues 144–212 (MRLVQLLIAC…PIGNNSAGSD (69 aa)). The tract at residues 231–301 (FKLVYENCPH…HRVRRLRITA (71 aa)) is VHIID. A VHIID motif is present at residues 262–266 (LHVVD). Residues 311-343 (VIGEELSIYAKNLGIHLEFSIVEKNLENLKPKD) form a leucine repeat II (LRII) region. Positions 352–443 (LVVNSILQLH…QFYFAEEIKN (92 aa)) are PFYRE. The tract at residues 446 to 520 (SCEGPLRMER…KPIVAVSCWK (75 aa)) is SAW.

The protein belongs to the GRAS family. In terms of assembly, interacts with RAM1. Interacts with NSP2.

It localises to the nucleus. Transcription factor acting as a regulator of arbuscular mycorrhiza (AM)-related genes (e.g. STR). Required for the morphogenesis of arbuscules upon symbiosis with AM fungi (e.g. Glomus versiforme). Also involved in restricting mycorrhizal colonization of the root meristem. This is GRAS family protein RAD1 from Medicago truncatula (Barrel medic).